The chain runs to 145 residues: Neutral phospholipase A2 homolog taipoxin beta chain 1 (145 aa).

The signal sequence occupies residues 1-27 (MHPAHLLVLLAVCVSLLGASDIPPLPL). 7 disulfides stabilise this stretch: Cys38–Cys98, Cys54–Cys144, Cys56–Cys72, Cys71–Cys125, Cys78–Cys118, Cys87–Cys111, and Cys105–Cys116.

This sequence belongs to the phospholipase A2 family. Group I subfamily. D49 sub-subfamily. In terms of assembly, heterotrimer of alpha, beta, and gamma chains; non-covalently linked. In terms of tissue distribution, expressed by the venom gland.

It localises to the secreted. Heterotrimer: Snake venom phospholipase A2 (PLA2) heterotrimer that acts as a potent presynaptic neurotoxin by blocking synaptic transmission and synaptic vesicle recycling. May act by binding in a calcium-dependent fashion to neurotonal pentraxin-1 (NPTX1) and neurotonal pentraxin-2 (NPTX2), but not to neuronal pentraxin receptor (NPTXR). Also binds to taipoxin-associated calcium binding protein 49 (RCN2), a protein localized in the lumen of endoplasmic reticulum. Functionally, monomer (beta chain): Snake venom phospholipase A2 homolog that is neither toxic nor enzymatically active. Does not bind calcium. The polypeptide is Neutral phospholipase A2 homolog taipoxin beta chain 1 (Oxyuranus scutellatus scutellatus (Australian taipan)).